The following is a 321-amino-acid chain: Small ribosomal subunit protein mS43 (321 aa).

The N-terminal 13 residues, 1–13 (MLRFTGARAIRKY), are a transit peptide targeting the mitochondrion.

This sequence belongs to the mitochondrion-specific ribosomal protein mS43 family. As to quaternary structure, component of the mitochondrial small ribosomal subunit (mt-SSU). Mature yeast 74S mitochondrial ribosomes consist of a small (37S) and a large (54S) subunit. The 37S small subunit contains a 15S ribosomal RNA (15S mt-rRNA) and 34 different proteins. The 54S large subunit contains a 21S rRNA (21S mt-rRNA) and 46 different proteins. mS43 forms a heterodimer with mS42, building a large protuberance adjacent to the mRNA channel exit in the mt-SSU body.

Its subcellular location is the mitochondrion. Functionally, component of the mitochondrial ribosome (mitoribosome), a dedicated translation machinery responsible for the synthesis of mitochondrial genome-encoded proteins, including at least some of the essential transmembrane subunits of the mitochondrial respiratory chain. The mitoribosomes are attached to the mitochondrial inner membrane and translation products are cotranslationally integrated into the membrane. In Saccharomyces cerevisiae (strain ATCC 204508 / S288c) (Baker's yeast), this protein is Small ribosomal subunit protein mS43 (MRP1).